Here is a 420-residue protein sequence, read N- to C-terminus: MADLSLDELIRKRGTAAKGRLSVRPGIGGVRSRVGIQHSLVNQPARTATFQQRFDARQKIGLSDARLKLGVKDAREKLLQKDARFRIKGKVQDAREMLNSRKQQGTVPQKPRQVADAREKISLKRRSPAAFTSPPIGTVTPALKLTKTIQVPQQKAMVPLHAHPAGMRINVVNNHQAKQNLYDLDEDDDIVVPVPPKQMKFAATGSLVHHMTGLSSSKLSMSKALPLTKVVQNDAYTAPVLPSSVRTKALTSMSRTLVNKEEPPKELPPAEPVLSPLEGTKMTVNNLHPRVTEEDIVELFCVCGALKRARLVHPGVAEVVFVKKDDAITAYKKYNNRCLDGQPMKCNLHMNGNVITSDQPILLRLSDSPSVKKESELPRRGNPASSNPPAEVDPDTVLRALFKSSGASVTTQPTEFKIKL.

At Ala-2 the chain carries N-acetylalanine. Ser-5 bears the Phosphoserine mark. Arg-33 is subject to Omega-N-methylarginine. Ser-127 carries the phosphoserine modification. The residue at position 140 (Thr-140) is a Phosphothreonine. Residue Lys-200 forms a Glycyl lysine isopeptide (Lys-Gly) (interchain with G-Cter in SUMO2) linkage. A phosphoserine mark is found at Ser-215 and Ser-217. A Glycyl lysine isopeptide (Lys-Gly) (interchain with G-Cter in SUMO2) cross-link involves residue Lys-223. Ser-244 is subject to Phosphoserine. Lys-248 is covalently cross-linked (Glycyl lysine isopeptide (Lys-Gly) (interchain with G-Cter in SUMO2)). The disordered stretch occupies residues 256 to 277 (TLVNKEEPPKELPPAEPVLSPL). Ser-275 is modified (phosphoserine). The region spanning 280–351 (TKMTVNNLHP…QPMKCNLHMN (72 aa)) is the RRM domain. Residues 369 to 394 (PSVKKESELPRRGNPASSNPPAEVDP) form a disordered region. A compositionally biased stretch (basic and acidic residues) spans 370-379 (SVKKESELPR). Lys-372 is covalently cross-linked (Glycyl lysine isopeptide (Lys-Gly) (interchain with G-Cter in SUMO2)). At Ser-385 the chain carries Phosphoserine. A Glycyl lysine isopeptide (Lys-Gly) (interchain with G-Cter in SUMO2) cross-link involves residue Lys-417.

As to quaternary structure, interacts with POLD2. Interacts with NCBP1 and EIF4A3. Associates with the multiprotein exon junction complex (EJC). Interacts with RPS6KB1 (activated). Interacts with ERH. Interacts with THOC2, DDX39B and ZC3H11A; the interactions are ATP-dependent and indicative for an association with the TREX complex.

The protein resides in the nucleus. The protein localises to the nucleus speckle. It localises to the cytoplasm. Its function is as follows. Is involved in regulation of translation. Is preferentially associated with CBC-bound spliced mRNA-protein complexes during the pioneer round of mRNA translation. Contributes to enhanced translational efficiency of spliced over nonspliced mRNAs. Recruits activated ribosomal protein S6 kinase beta-1 I/RPS6KB1 to newly synthesized mRNA. Involved in nuclear mRNA export; probably mediated by association with the TREX complex. The protein is Polymerase delta-interacting protein 3 (Poldip3) of Mus musculus (Mouse).